The chain runs to 163 residues: Nucleotide-binding protein HSM_1099 (163 aa).

This sequence belongs to the YajQ family.

Functionally, nucleotide-binding protein. This chain is Nucleotide-binding protein HSM_1099, found in Histophilus somni (strain 2336) (Haemophilus somnus).